The primary structure comprises 129 residues: Glycine cleavage system H protein (129 aa).

The Lipoyl-binding domain maps to 24-106 (IAVIGITAYA…YGDGWLIKVR (83 aa)). N6-lipoyllysine is present on Lys65.

It belongs to the GcvH family. As to quaternary structure, the glycine cleavage system is composed of four proteins: P, T, L and H. Requires (R)-lipoate as cofactor.

The glycine cleavage system catalyzes the degradation of glycine. The H protein shuttles the methylamine group of glycine from the P protein to the T protein. The chain is Glycine cleavage system H protein from Synechococcus sp. (strain JA-2-3B'a(2-13)) (Cyanobacteria bacterium Yellowstone B-Prime).